The primary structure comprises 299 residues: ATP phosphoribosyltransferase (299 aa).

The protein belongs to the ATP phosphoribosyltransferase family. Long subfamily. Equilibrium between an active dimeric form, an inactive hexameric form and higher aggregates. Interconversion between the various forms is largely reversible and is influenced by the natural substrates and inhibitors of the enzyme. Mg(2+) is required as a cofactor.

Its subcellular location is the cytoplasm. It carries out the reaction 1-(5-phospho-beta-D-ribosyl)-ATP + diphosphate = 5-phospho-alpha-D-ribose 1-diphosphate + ATP. The protein operates within amino-acid biosynthesis; L-histidine biosynthesis; L-histidine from 5-phospho-alpha-D-ribose 1-diphosphate: step 1/9. Its activity is regulated as follows. Feedback inhibited by histidine. In terms of biological role, catalyzes the condensation of ATP and 5-phosphoribose 1-diphosphate to form N'-(5'-phosphoribosyl)-ATP (PR-ATP). Has a crucial role in the pathway because the rate of histidine biosynthesis seems to be controlled primarily by regulation of HisG enzymatic activity. The sequence is that of ATP phosphoribosyltransferase from Salmonella enteritidis PT4 (strain P125109).